Consider the following 96-residue polypeptide: Myticin-A (96 aa).

Residues 1–20 (MKATILLAVLVAVFVAGTEA) form the signal peptide. A propeptide spans 61–96 (VNNPFRVNQVAKSINDLDYTPIMKSMENLDNGMDML) (removed in mature form).

Post-translationally, contains four disulfide bonds. In terms of tissue distribution, hemocytes.

It localises to the secreted. Its function is as follows. Bacteriolytic activity against Gram-positive bacteria M.luteus, B.megaterium and A.viridans. The protein is Myticin-A of Mytilus galloprovincialis (Mediterranean mussel).